The chain runs to 332 residues: T-cell surface glycoprotein CD1c2 (332 aa).

A signal peptide spans 1–17; the sequence is MLFLQFLFVDVVLGGSI. Over 18–300 the chain is Extracellular; it reads TENVVQENIS…IILYWGHGLS (283 aa). 3 N-linked (GlcNAc...) asparagine glycosylation sites follow: asparagine 25, asparagine 38, and asparagine 75. Intrachain disulfides connect cysteine 120–cysteine 184 and cysteine 224–cysteine 279. The Ig-like domain occupies 205 to 292; the sequence is PEVWLSSSPN…HSSLRDQDII (88 aa). The chain crosses the membrane as a helical span at residues 301-321; the sequence is VILIALAVIVPLVLLIVLVLL. At 322–332 the chain is on the cytoplasmic side; that stretch reads CKKRCTYQGIP.

In terms of assembly, heterodimer with B2M (beta-2-microglobulin).

Its subcellular location is the cell membrane. The protein resides in the endosome membrane. In terms of biological role, antigen-presenting protein that binds self and non-self lipid and glycolipid antigens and presents them to T-cell receptors on natural killer T-cells. This Cavia porcellus (Guinea pig) protein is T-cell surface glycoprotein CD1c2 (CD1C2).